Reading from the N-terminus, the 499-residue chain is UDP-N-acetylmuramoyl-L-alanyl-D-glutamate--2,6-diaminopimelate ligase (499 aa).

UDP-N-acetyl-alpha-D-muramoyl-L-alanyl-D-glutamate-binding residues include Leu-30 and Ser-32. 122–128 (GTNGKTT) contacts ATP. UDP-N-acetyl-alpha-D-muramoyl-L-alanyl-D-glutamate contacts are provided by residues 164–165 (TT), Ser-191, Gln-197, and Arg-199. N6-carboxylysine is present on Lys-231. Residues Arg-397, 421-424 (DNPR), Gly-472, and Glu-476 each bind meso-2,6-diaminopimelate. A Meso-diaminopimelate recognition motif motif is present at residues 421-424 (DNPR).

This sequence belongs to the MurCDEF family. MurE subfamily. Requires Mg(2+) as cofactor. In terms of processing, carboxylation is probably crucial for Mg(2+) binding and, consequently, for the gamma-phosphate positioning of ATP.

It is found in the cytoplasm. The catalysed reaction is UDP-N-acetyl-alpha-D-muramoyl-L-alanyl-D-glutamate + meso-2,6-diaminopimelate + ATP = UDP-N-acetyl-alpha-D-muramoyl-L-alanyl-gamma-D-glutamyl-meso-2,6-diaminopimelate + ADP + phosphate + H(+). Its pathway is cell wall biogenesis; peptidoglycan biosynthesis. Its function is as follows. Catalyzes the addition of meso-diaminopimelic acid to the nucleotide precursor UDP-N-acetylmuramoyl-L-alanyl-D-glutamate (UMAG) in the biosynthesis of bacterial cell-wall peptidoglycan. This Blochmanniella floridana protein is UDP-N-acetylmuramoyl-L-alanyl-D-glutamate--2,6-diaminopimelate ligase.